The following is a 513-amino-acid chain: Mesoderm induction early response protein 1 (513 aa).

The span at 1–16 shows a compositional bias: low complexity; sequence MAEPSVESSSPGGSAT. The interval 1-174 is disordered; sequence MAEPSVESSS…EEESEEDEDY (174 aa). Composition is skewed to basic and acidic residues over residues 17-36 and 46-63; these read SDDH…FDDE and EGER…RESD. Residues 82 to 107 are compositionally biased toward acidic residues; sequence QEDDDDEDEEEEEEEGEDDDDVDNDD. Over residues 131 to 146 the composition is skewed to polar residues; the sequence is QSSNDDPAPSVASQDP. Residues 157-261 form an interaction with HDAC1 region; the sequence is YFDTNSEIEE…IKDNEQALYE (105 aa). Residues 162 to 174 are compositionally biased toward acidic residues; that stretch reads SEIEEESEEDEDY. Residues 182–280 form the ELM2 domain; the sequence is KEIMVGSMFQ…ESLRRLRFNV (99 aa). An SANT domain is found at 285-337; sequence EELSVWTEEECRNFEQGLKVYGKDFHVIQANKVRTRSVGECVAFYYMWKKSER. Residues 368 to 513 form a disordered region; the sequence is ESESAASSRA…KLEELETLDD (146 aa). Composition is skewed to basic and acidic residues over residues 416–425 and 463–476; these read PSKDEAKPEG and SRSE…NERP. Positions 483-500 are enriched in polar residues; sequence NSNGKESPGSSEFFQEAN.

Its subcellular location is the nucleus. Functionally, transcriptional repressor regulating the expression of a number of genes. Probably functions through recruitment of histone deacetylases involved in chromatin silencing. This is Mesoderm induction early response protein 1 (MIER1) from Gallus gallus (Chicken).